Here is a 276-residue protein sequence, read N- to C-terminus: Glutamate 5-kinase (276 aa).

Position 14 (Lys14) interacts with ATP. Residues Ser54, Asp141, and Asn157 each contribute to the substrate site. Residues 177–178 and 219–225 contribute to the ATP site; these read SD and TGGMLTK.

The protein belongs to the glutamate 5-kinase family.

The protein localises to the cytoplasm. It catalyses the reaction L-glutamate + ATP = L-glutamyl 5-phosphate + ADP. The protein operates within amino-acid biosynthesis; L-proline biosynthesis; L-glutamate 5-semialdehyde from L-glutamate: step 1/2. Functionally, catalyzes the transfer of a phosphate group to glutamate to form L-glutamate 5-phosphate. The polypeptide is Glutamate 5-kinase (Listeria monocytogenes serotype 4a (strain HCC23)).